A 1149-amino-acid polypeptide reads, in one-letter code: Protein deacetylase HDAC6 (1149 aa).

A disordered region spans residues Met1 to Pro61. The segment covering Asn18–Thr29 has biased composition (polar residues). The residue at position 21 (Ser21) is a Phosphoserine. Arg32 carries the omega-N-methylarginine modification. Ser43 carries the post-translational modification Phosphoserine. Positions Leu66–Leu75 match the Nuclear export signal motif. Histone deacetylase stretches follow at residues Leu87–Gly403 and Gly481–Gly799. His215 serves as the catalytic 1. His610 serves as the catalytic 2. The interval Ala954–Ser975 is disordered. Residues Thr958, Thr961, Thr967, and Thr971 each carry the phosphothreonine modification. The span at Ala964–Ser975 shows a compositional bias: polar residues. Ser975 carries the phosphoserine modification. Residues Ser1045–Glu1143 form a UBP-type zinc finger. The Zn(2+) site is built by Cys1047, His1049, Cys1067, Cys1070, Cys1079, Cys1082, and Cys1087. The segment at Ser1088 to Tyr1090 is ubiquitin binding. Zn(2+)-binding residues include His1094, His1098, His1104, Cys1117, and Cys1120. Residues Trp1116–Tyr1123 form a ubiquitin binding region. Ser1148 is modified (phosphoserine).

Belongs to the histone deacetylase family. HD type 2 subfamily. Forms a trimeric complex in the nucleus consisting of BANP, HDAC6 and KHDRBS1/SAM68; HDAC6 keeps KHDRBS1 in a deacetylated state which inhibits the inclusion of CD44 alternate exons. The complex is disrupted by MAPK1/MAPK3-mediated phosphorylation of BANP which results in BANP export to the cytoplasm. This facilitates acetylation of KHDRBS1 and CD44 variant exon inclusion. Interacts with SIRT2 (via both phosphorylated, unphosphorylated, active or inactive forms); the interaction is necessary for the complex to interact with alpha-tubulin. Under proteasome impairment conditions, interacts with UBD via its histone deacetylase 1 and UBP-type zinc-finger regions. Interacts with BBIP1, CBFA2T3, CYLD, DDIT3/CHOP, ZMYND15, F-actin and HDAC11. Interacts with RIPOR2; this interaction occurs during early myogenic differentiation and prevents HDAC6 to deacetylate tubulin. Interacts with AURKA; AURKA-mediated phosphorylation of HDAC6 promotes deacetylation of alpha-tubulin. Interacts with DYSF; this interaction occurs during early myogenic differentiation. Interacts with TPPP; inhibiting the tubulin deacetylase activity of HDAC6. Interacts with DYNLL1. Interacts with ATP13A2; the interaction results in recruitment of HDAC6 to lysosomes to promote CTTN deacetylation. Interacts with CCDC141 (via the N-terminal region); inhibiting the deacetylase activity of HDAC6. Interacts with IPO7; the interaction facilitates HDAC6 nuclear translocation in dental papilla cells. It depends on Zn(2+) as a cofactor. Phosphorylated by AURKA; phosphorylation increases HDAC6-mediated deacetylation of alpha-tubulin and subsequent disassembly of cilia. In terms of processing, ubiquitinated. Its polyubiquitination however does not lead to its degradation. Post-translationally, sumoylated in vitro. In terms of tissue distribution, expressed in neurons of the cortex. Expressed in Purkinje cells. Detected in keratinocytes (at protein level).

Its subcellular location is the cytoplasm. It localises to the cytoskeleton. It is found in the nucleus. The protein resides in the perikaryon. The protein localises to the cell projection. Its subcellular location is the dendrite. It localises to the axon. It is found in the cilium. The protein resides in the microtubule organizing center. The protein localises to the centrosome. Its subcellular location is the cilium basal body. The catalysed reaction is N(6)-acetyl-L-lysyl-[protein] + H2O = L-lysyl-[protein] + acetate. It carries out the reaction N(6)-acetyl-L-lysyl-[alpha-tubulin] + H2O = L-lysyl-[alpha-tubulin] + acetate. It participates in protein modification; protein ubiquitination. Functionally, deacetylates a wide range of non-histone substrates. Plays a central role in microtubule-dependent cell motility by mediating deacetylation of tubulin. Required for cilia disassembly via deacetylation of alpha-tubulin. Alpha-tubulin deacetylation results in destabilization of dynamic microtubules. Promotes deacetylation of CTTN, leading to actin polymerization, promotion of autophagosome-lysosome fusion and completion of autophagy. Deacetylates SQSTM1. Deacetylates peroxiredoxins PRDX1 and PRDX2, decreasing their reducing activity. Deacetylates antiviral protein RIGI in the presence of viral mRNAs which is required for viral RNA detection by RIGI. Sequentially deacetylates and polyubiquitinates DNA mismatch repair protein MSH2 which leads to MSH2 degradation, reducing cellular sensitivity to DNA-damaging agents and decreasing cellular DNA mismatch repair activities. Deacetylates DNA mismatch repair protein MLH1 which prevents recruitment of the MutL alpha complex (formed by the MLH1-PMS2 heterodimer) to the MutS alpha complex (formed by the MSH2-MSH6 heterodimer), leading to tolerance of DNA damage. Deacetylates RHOT1/MIRO1 which blocks mitochondrial transport and mediates axon growth inhibition. Deacetylates transcription factor SP1 which leads to increased expression of ENG, positively regulating angiogenesis. Deacetylates KHDRBS1/SAM68 which regulates alternative splicing by inhibiting the inclusion of CD44 alternate exons. Promotes odontoblast differentiation following IPO7-mediated nuclear import and subsequent repression of RUNX2 expression. In addition to its protein deacetylase activity, plays a key role in the degradation of misfolded proteins: when misfolded proteins are too abundant to be degraded by the chaperone refolding system and the ubiquitin-proteasome, mediates the transport of misfolded proteins to a cytoplasmic juxtanuclear structure called aggresome. Probably acts as an adapter that recognizes polyubiquitinated misfolded proteins and target them to the aggresome, facilitating their clearance by autophagy. The sequence is that of Protein deacetylase HDAC6 from Mus musculus (Mouse).